Reading from the N-terminus, the 481-residue chain is Glutamate mutase epsilon subunit (481 aa).

L-glutamate is bound at residue Arg-67. Gly-69 lines the adenosylcob(III)alamin pocket. Arg-99 provides a ligand contact to L-glutamate. Asn-122 lines the adenosylcob(III)alamin pocket. Residues 148–149, Glu-170, and Tyr-176 contribute to the L-glutamate site; that span reads RH. Pro-179 serves as a coordination point for adenosylcob(III)alamin. Tyr-180 contributes to the L-glutamate binding site. Phe-296, Lys-325, Glu-329, and Ile-333 together coordinate adenosylcob(III)alamin.

It belongs to the methylaspartate mutase GlmE subunit family. Heterotetramer composed of 2 epsilon subunits (GlmE) and 2 sigma subunits (GlmS). GlmE exists as a homodimer and GlmS as a monomer. Requires adenosylcob(III)alamin as cofactor.

The enzyme catalyses (2S,3S)-3-methyl-L-aspartate = L-glutamate. It participates in amino-acid degradation; L-glutamate degradation via mesaconate pathway; acetate and pyruvate from L-glutamate: step 1/4. In terms of biological role, catalyzes the carbon skeleton rearrangement of L-glutamate to L-threo-3-methylaspartate ((2S,3S)-3-methylaspartate). In Escherichia coli O157:H7, this protein is Glutamate mutase epsilon subunit.